Here is a 128-residue protein sequence, read N- to C-terminus: B2 protein (128 aa).

A signal peptide spans 1 to 10 (SLILLVAVQA). Intrachain disulfides connect Cys-26-Cys-57 and Cys-97-Cys-114.

This sequence belongs to the PBP/GOBP family. Post-translationally, N-glycosylated. In terms of tissue distribution, tubular accessory sex gland.

The protein resides in the secreted. Functionally, may be a carrier protein for lipids. This chain is B2 protein, found in Tenebrio molitor (Yellow mealworm beetle).